Reading from the N-terminus, the 438-residue chain is Aspartate--tRNA(Asp/Asn) ligase (438 aa).

Glutamate 176 is a binding site for L-aspartate. The tract at residues 198 to 201 (QLYK) is aspartate. Arginine 220 is an L-aspartate binding site. Residues 220-222 (RAE), 228-230 (RHL), and glutamate 361 contribute to the ATP site. The Mg(2+) site is built by glutamate 361 and serine 364. The L-aspartate site is built by serine 364 and arginine 368. 409-412 (GADR) contacts ATP.

The protein belongs to the class-II aminoacyl-tRNA synthetase family. Type 2 subfamily. As to quaternary structure, homodimer. The cofactor is Mg(2+).

Its subcellular location is the cytoplasm. It catalyses the reaction tRNA(Asx) + L-aspartate + ATP = L-aspartyl-tRNA(Asx) + AMP + diphosphate. In terms of biological role, aspartyl-tRNA synthetase with relaxed tRNA specificity since it is able to aspartylate not only its cognate tRNA(Asp) but also tRNA(Asn). Reaction proceeds in two steps: L-aspartate is first activated by ATP to form Asp-AMP and then transferred to the acceptor end of tRNA(Asp/Asn). The sequence is that of Aspartate--tRNA(Asp/Asn) ligase from Methanococcus vannielii (strain ATCC 35089 / DSM 1224 / JCM 13029 / OCM 148 / SB).